The primary structure comprises 408 residues: uncharacterized protein (408 aa).

The chain crosses the membrane as a helical span at residues 56–76 (YWAGPAAASMVAAVTPYVAWL).

It belongs to the mycobacterial PPE family.

The protein localises to the cell membrane. This is an uncharacterized protein from Mycobacterium bovis (strain ATCC BAA-935 / AF2122/97).